The following is a 599-amino-acid chain: Elongation factor 4 (599 aa).

One can recognise a tr-type G domain in the interval serine 5 to threonine 187. Residues aspartate 17 to threonine 22 and asparagine 134 to aspartate 137 each bind GTP.

It belongs to the TRAFAC class translation factor GTPase superfamily. Classic translation factor GTPase family. LepA subfamily.

It localises to the cell inner membrane. It catalyses the reaction GTP + H2O = GDP + phosphate + H(+). Its function is as follows. Required for accurate and efficient protein synthesis under certain stress conditions. May act as a fidelity factor of the translation reaction, by catalyzing a one-codon backward translocation of tRNAs on improperly translocated ribosomes. Back-translocation proceeds from a post-translocation (POST) complex to a pre-translocation (PRE) complex, thus giving elongation factor G a second chance to translocate the tRNAs correctly. Binds to ribosomes in a GTP-dependent manner. This Ectopseudomonas mendocina (strain ymp) (Pseudomonas mendocina) protein is Elongation factor 4.